Consider the following 79-residue polypeptide: RNA-binding protein Hfq (79 aa).

The region spanning 10-70 is the Sm domain; it reads DVFLNTVRKQ…ISTIMPGQPV (61 aa).

This sequence belongs to the Hfq family. In terms of assembly, homohexamer.

Functionally, RNA chaperone that binds small regulatory RNA (sRNAs) and mRNAs to facilitate mRNA translational regulation in response to envelope stress, environmental stress and changes in metabolite concentrations. Also binds with high specificity to tRNAs. The sequence is that of RNA-binding protein Hfq from Bartonella henselae (strain ATCC 49882 / DSM 28221 / CCUG 30454 / Houston 1) (Rochalimaea henselae).